The following is a 267-amino-acid chain: Alkaline ceramidase 3 (267 aa).

Topologically, residues 1–33 are cytoplasmic; sequence MAPAVDRKGYWGPTTSTLDWCEENYVVTLFVAE. Asp19, Trp20, Glu22, Asn24, and Glu33 together coordinate Ca(2+). A helical membrane pass occupies residues 34–55; that stretch reads FWNTVSNLIMIIPPIFGAIQGI. The Lumenal segment spans residues 56–61; it reads RDRLEK. Residues 62-82 form a helical membrane-spanning segment; the sequence is RYIAAYLALTVVGMGSWCFHM. His81 lines the Zn(2+) pocket. The Cytoplasmic portion of the chain corresponds to 83 to 87; it reads TLKYE. Residues 88–108 traverse the membrane as a helical segment; that stretch reads MQLLDELPMIYSCCIFVYCMF. The Lumenal segment spans residues 109-118; the sequence is ECFKTKSSIN. The chain crosses the membrane as a helical span at residues 119-139; it reads YHLLFTLFLYSLTVTTIYLKV. At 140-141 the chain is on the cytoplasmic side; the sequence is KE. A helical transmembrane segment spans residues 142–162; it reads PIFHQVMYGMLVFTLVLRSIY. The Lumenal segment spans residues 163–173; sequence IVTWVYPWLRG. A helical transmembrane segment spans residues 174–194; the sequence is LGYTSLTVFLLGFLLWNIDNI. Residues 195 to 215 lie on the Cytoplasmic side of the membrane; it reads FCDSLRNFRKRVPPVLGVTTQ. The helical transmembrane segment at 216-236 threads the bilayer; that stretch reads FHAWWHILTGLGSYLHILFSL. Zn(2+)-binding residues include His217 and His221. Over 237–267 the chain is Lumenal; sequence YTRTLYLRYRPKVKFLFGIWPAVMFEPQRKH.

Belongs to the alkaline ceramidase family. The cofactor is Zn(2+). In terms of tissue distribution, up-regulated with age in cerebeLlum and cerebrum.

The protein resides in the endoplasmic reticulum membrane. It is found in the golgi apparatus membrane. The enzyme catalyses an N-acyl-(4R)-4-hydroxysphinganine + H2O = (4R)-hydroxysphinganine + a fatty acid. It catalyses the reaction N-(5Z,8Z,11Z,14Z-eicosatetraenoyl)-sphing-4-enine + H2O = sphing-4-enine + (5Z,8Z,11Z,14Z)-eicosatetraenoate. It carries out the reaction N-(5Z,8Z,11Z,14Z-eicosatetraenoyl)-sphinganine + H2O = sphinganine + (5Z,8Z,11Z,14Z)-eicosatetraenoate. The catalysed reaction is N-(5Z,8Z,11Z,14Z-eicosatetraenoyl)-(4R)-hydroxysphinganine + H2O = (4R)-hydroxysphinganine + (5Z,8Z,11Z,14Z)-eicosatetraenoate. The enzyme catalyses N-(11Z-eicosenoyl)-sphing-4-enine + H2O = (11Z)-eicosenoate + sphing-4-enine. It catalyses the reaction N-(11Z-eicosenoyl)-sphinganine + H2O = (11Z)-eicosenoate + sphinganine. It carries out the reaction N-(11Z-eicosenoyl)-(4R)-hydroxysphinganine + H2O = (11Z)-eicosenoate + (4R)-hydroxysphinganine. The catalysed reaction is N-(9Z-octadecenoyl)-sphing-4-enine + H2O = sphing-4-enine + (9Z)-octadecenoate. The enzyme catalyses N-(9Z-octadecenoyl)-sphinganine + H2O = sphinganine + (9Z)-octadecenoate. It catalyses the reaction N-(9Z-octadecenoyl)-(4R)-hydroxysphinganine + H2O = (4R)-hydroxysphinganine + (9Z)-octadecenoate. It carries out the reaction an N-acylsphing-4-enine + H2O = sphing-4-enine + a fatty acid. The catalysed reaction is an N-acylsphinganine + H2O = sphinganine + a fatty acid. The protein operates within lipid metabolism; sphingolipid metabolism. Its activity is regulated as follows. Activated by Ca(2+) and inhibited by Zn(2+). Endoplasmic reticulum and Golgi ceramidase that catalyzes the hydrolysis of unsaturated long-chain C18:1-, C20:1- and C20:4-ceramides, dihydroceramides and phytoceramides into sphingoid bases like sphingosine and free fatty acids at alkaline pH. Ceramides, sphingosine, and its phosphorylated form sphingosine-1-phosphate are bioactive lipids that mediate cellular signaling pathways regulating several biological processes including cell proliferation, apoptosis and differentiation. Controls the generation of sphingosine in erythrocytes, and thereby sphingosine-1-phosphate in plasma. Through the regulation of ceramides and sphingosine-1-phosphate homeostasis in the brain may play a role in neurons survival and function. By regulating the levels of pro-inflammatory ceramides in immune cells and tissues, may modulate the inflammatory response. The polypeptide is Alkaline ceramidase 3 (Acer3) (Mus musculus (Mouse)).